We begin with the raw amino-acid sequence, 458 residues long: ATP synthase subunit beta (458 aa).

Residue 148 to 155 participates in ATP binding; the sequence is GGAGVGKT.

Belongs to the ATPase alpha/beta chains family. In terms of assembly, F-type ATPases have 2 components, CF(1) - the catalytic core - and CF(0) - the membrane proton channel. CF(1) has five subunits: alpha(3), beta(3), gamma(1), delta(1), epsilon(1). CF(0) has three main subunits: a(1), b(2) and c(9-12). The alpha and beta chains form an alternating ring which encloses part of the gamma chain. CF(1) is attached to CF(0) by a central stalk formed by the gamma and epsilon chains, while a peripheral stalk is formed by the delta and b chains.

The protein localises to the cell inner membrane. It carries out the reaction ATP + H2O + 4 H(+)(in) = ADP + phosphate + 5 H(+)(out). Its function is as follows. Produces ATP from ADP in the presence of a proton gradient across the membrane. The catalytic sites are hosted primarily by the beta subunits. This Legionella pneumophila (strain Paris) protein is ATP synthase subunit beta.